Here is a 339-residue protein sequence, read N- to C-terminus: Phosphate acyltransferase (339 aa).

Belongs to the PlsX family. Homodimer. Probably interacts with PlsY.

The protein resides in the cytoplasm. The catalysed reaction is a fatty acyl-[ACP] + phosphate = an acyl phosphate + holo-[ACP]. It participates in lipid metabolism; phospholipid metabolism. In terms of biological role, catalyzes the reversible formation of acyl-phosphate (acyl-PO(4)) from acyl-[acyl-carrier-protein] (acyl-ACP). This enzyme utilizes acyl-ACP as fatty acyl donor, but not acyl-CoA. The protein is Phosphate acyltransferase of Clostridium perfringens (strain SM101 / Type A).